Consider the following 261-residue polypeptide: Imidazole glycerol phosphate synthase subunit HisF (261 aa).

Residues Asp-16 and Asp-135 contribute to the active site.

This sequence belongs to the HisA/HisF family. In terms of assembly, heterodimer of HisH and HisF.

Its subcellular location is the cytoplasm. It catalyses the reaction 5-[(5-phospho-1-deoxy-D-ribulos-1-ylimino)methylamino]-1-(5-phospho-beta-D-ribosyl)imidazole-4-carboxamide + L-glutamine = D-erythro-1-(imidazol-4-yl)glycerol 3-phosphate + 5-amino-1-(5-phospho-beta-D-ribosyl)imidazole-4-carboxamide + L-glutamate + H(+). It functions in the pathway amino-acid biosynthesis; L-histidine biosynthesis; L-histidine from 5-phospho-alpha-D-ribose 1-diphosphate: step 5/9. IGPS catalyzes the conversion of PRFAR and glutamine to IGP, AICAR and glutamate. The HisF subunit catalyzes the cyclization activity that produces IGP and AICAR from PRFAR using the ammonia provided by the HisH subunit. The protein is Imidazole glycerol phosphate synthase subunit HisF of Mycolicibacterium smegmatis (strain ATCC 700084 / mc(2)155) (Mycobacterium smegmatis).